We begin with the raw amino-acid sequence, 342 residues long: Methionine import ATP-binding protein MetN 3 (342 aa).

In terms of domain architecture, ABC transporter spans 2–241 (ISLKGISKTF…PKEQMTKEFV (240 aa)). 38 to 45 (GYSGAGKS) contacts ATP.

It belongs to the ABC transporter superfamily. Methionine importer (TC 3.A.1.24) family. The complex is composed of two ATP-binding proteins (MetN), two transmembrane proteins (MetI) and a solute-binding protein (MetQ).

It localises to the cell membrane. It carries out the reaction L-methionine(out) + ATP + H2O = L-methionine(in) + ADP + phosphate + H(+). The catalysed reaction is D-methionine(out) + ATP + H2O = D-methionine(in) + ADP + phosphate + H(+). Functionally, part of the ABC transporter complex MetNIQ involved in methionine import. Responsible for energy coupling to the transport system. The protein is Methionine import ATP-binding protein MetN 3 of Shouchella clausii (strain KSM-K16) (Alkalihalobacillus clausii).